We begin with the raw amino-acid sequence, 543 residues long: EH domain-containing protein 2 (543 aa).

S3 is modified (phosphoserine). The 232-residue stretch at 55–286 folds into the Dynamin-type G domain; the sequence is FDGKPMVLVA…DLFRDIQGLP (232 aa). The interval 65-72 is G1 motif; that stretch reads GQYSTGKT. An ATP-binding site is contributed by 65-72; the sequence is GQYSTGKT. The interval 91-92 is G2 motif; it reads EP. The short motif at 120 to 122 is the KPF loop; caveolar targeting element; sequence KPF. The segment at 153–156 is G3 motif; it reads DTPG. Residues 219–222 are G4 motif; sequence NKAD. Residue K220 participates in ATP binding. Position 243 (V243) is a region of interest, G5 motif. W258 lines the ATP pocket. The interval 320–340 is mediates membrane-binding; the sequence is SVFGKENKKKQLILKLPVIFA. Residues S438, S468, S470, S484, and S493 each carry the phosphoserine modification. Residues 449–537 form the EH domain; sequence DKSKYDEIFY…RRLVPPSKRR (89 aa). The EF-hand domain maps to 481–516; that stretch reads LPNSVLGRIWKLSDVDRDGMLDDEEFALASHLIEAK. Ca(2+) is bound by residues D494, D496, D498, M500, and E505. The tract at residues 523–543 is disordered; the sequence is PANLPRRLVPPSKRRHKGSAE. Residues 534-543 show a composition bias toward basic residues; it reads SKRRHKGSAE.

This sequence belongs to the TRAFAC class dynamin-like GTPase superfamily. Dynamin/Fzo/YdjA family. EHD subfamily. In terms of assembly, homodimer and homooligomer. Interacts with EHD1. May also interact with EHD3 and EHD4. Interacts with MYOF. Interacts with EHBP1. Interacts with FER1L5 (via second C2 domain). Interacts with CAV1 in a cholesterol-dependent manner. Interacts (via EH domain) with PACSIN2 (via NPF motifs); this interaction probably stabilizes the caveolae. As to expression, highly expressed in heart and moderately expressed in placenta, lung, and skeletal muscle.

The protein resides in the cell membrane. The protein localises to the membrane. It localises to the caveola. It is found in the endosome membrane. Its subcellular location is the cytoplasm. The protein resides in the cytosol. The very low intrinsic ATPase activity is increased upon interaction with liposomes. ATP- and membrane-binding protein that controls membrane reorganization/tubulation upon ATP hydrolysis. Plays a role in membrane trafficking between the plasma membrane and endosomes. Important for the internalization of GLUT4. Required for fusion of myoblasts to skeletal muscle myotubes. Required for normal translocation of FER1L5 to the plasma membrane. Regulates the equilibrium between cell surface-associated and cell surface-dissociated caveolae by constraining caveolae at the cell membrane. The chain is EH domain-containing protein 2 from Homo sapiens (Human).